Here is a 592-residue protein sequence, read N- to C-terminus: Glutamine--fructose-6-phosphate aminotransferase [isomerizing] (592 aa).

Cys2 (nucleophile; for GATase activity) is an active-site residue. Residues 2-217 enclose the Glutamine amidotransferase type-2 domain; that stretch reads CGIVGYVGRD…DGEIADLTPD (216 aa). SIS domains follow at residues 277–416 and 441–582; these read IPFK…EREN and VAEK…VDQP. Lys587 (for Fru-6P isomerization activity) is an active-site residue.

As to quaternary structure, homodimer.

Its subcellular location is the cytoplasm. It catalyses the reaction D-fructose 6-phosphate + L-glutamine = D-glucosamine 6-phosphate + L-glutamate. Functionally, catalyzes the first step in hexosamine metabolism, converting fructose-6P into glucosamine-6P using glutamine as a nitrogen source. This is Glutamine--fructose-6-phosphate aminotransferase [isomerizing] from Aquifex aeolicus (strain VF5).